A 550-amino-acid polypeptide reads, in one-letter code: Glucose-6-phosphate isomerase (550 aa).

E356 (proton donor) is an active-site residue. Catalysis depends on residues H387 and K515.

Belongs to the GPI family.

It is found in the cytoplasm. The enzyme catalyses alpha-D-glucose 6-phosphate = beta-D-fructose 6-phosphate. It participates in carbohydrate biosynthesis; gluconeogenesis. The protein operates within carbohydrate degradation; glycolysis; D-glyceraldehyde 3-phosphate and glycerone phosphate from D-glucose: step 2/4. Catalyzes the reversible isomerization of glucose-6-phosphate to fructose-6-phosphate. The chain is Glucose-6-phosphate isomerase from Vibrio vulnificus (strain YJ016).